A 100-amino-acid polypeptide reads, in one-letter code: Urease subunit gamma (100 aa).

This sequence belongs to the urease gamma subunit family. Heterotrimer of UreA (gamma), UreB (beta) and UreC (alpha) subunits. Three heterotrimers associate to form the active enzyme.

It localises to the cytoplasm. The catalysed reaction is urea + 2 H2O + H(+) = hydrogencarbonate + 2 NH4(+). It participates in nitrogen metabolism; urea degradation; CO(2) and NH(3) from urea (urease route): step 1/1. In Pseudarthrobacter chlorophenolicus (strain ATCC 700700 / DSM 12829 / CIP 107037 / JCM 12360 / KCTC 9906 / NCIMB 13794 / A6) (Arthrobacter chlorophenolicus), this protein is Urease subunit gamma.